The sequence spans 274 residues: Chromatin modification-related protein YNG2 (274 aa).

The disordered stretch occupies residues 121-194 (EDEMESGPDF…ASTEREGTLD (74 aa)). Residues 166–180 (THREKSYNKGDDTAD) are compositionally biased toward basic and acidic residues. The PHD-type zinc-finger motif lies at 215–264 (NLYCFCQRVSFGEMVACDGPNCKYEWFHYECVNLTEPPKGTWYCPDCKQE). Positions 218, 220, 231, 236, 242, 245, 258, and 261 each coordinate Zn(2+).

It belongs to the ING family. Interacts with H3K4me3 and to a lesser extent with H3K4me2. Component of the NuA4 histone acetyltransferase complex.

Its subcellular location is the nucleus. Component of the NuA4 histone acetyltransferase complex which is involved in transcriptional activation of selected genes principally by acetylation of nucleosomal histone H4 and H2A. The NuA4 complex is also involved in DNA repair. Involved in cell cycle progression and meiosis. This is Chromatin modification-related protein YNG2 (YNG2) from Candida glabrata (strain ATCC 2001 / BCRC 20586 / JCM 3761 / NBRC 0622 / NRRL Y-65 / CBS 138) (Yeast).